We begin with the raw amino-acid sequence, 548 residues long: Rop guanine nucleotide exchange factor 1 (548 aa).

A compositionally biased stretch (acidic residues) spans 1-12; it reads MGSLSSEEDDEV. A disordered region spans residues 1–38; that stretch reads MGSLSSEEDDEVSSERCGSYSPSADISESESSSSFSCH. The segment covering 19-36 has biased composition (low complexity); it reads SYSPSADISESESSSSFS. The PRONE domain occupies 81-462; the sequence is DKQPDNDLSE…DAMRRSISVT (382 aa). The segment at 458–548 is involved in auto-inhibition; that stretch reads SISVTESLSL…RVTGVTPERD (91 aa). 2 positions are modified to phosphoserine: Ser-460 and Ser-480.

Interacts with ARAC10/ROP11 and FER. Forms a complex with ARAC11/ROP1 and PRK2. Interacts in vitro (via PRONE domain) with PRK1, PRK2, PRK3 and PRK4. The C-terminal region is also important for the interaction with PRK2. Post-translationally, phosphorylated at Ser-460 and Ser-480 by PRK2. In terms of tissue distribution, expressed in roots, cotyledons, leaves, stems, sepals, petals, anthers, pollen grains, stigmas and siliques.

The protein localises to the cytoplasm. It is found in the cytosol. The protein resides in the cell membrane. Phosphorylation at Ser-460 and Ser-480 by PRK2 releases ROPGEF1 auto-inhibition, thereby activating ROPGEF1, which in turn activates ARAC11/ROP1. Guanine-nucleotide exchange factor (GEF) that acts as an activator of Rop (Rho of plants) GTPases by promoting the exchange of GDP for GTP. Acts downstream of PRK2 in the control of polarized pollen tube growth by activating ARAC11/ROP1. In association with ROPGEF4, acts as a specific regulator of ARAC10/ROP11 function in ABA-mediated stomatal closure. May play a role in the Rac/Rop-signaling pathway that controls ROS-mediated root hair development. This is Rop guanine nucleotide exchange factor 1 (ROPGEF1) from Arabidopsis thaliana (Mouse-ear cress).